The following is a 344-amino-acid chain: Nuclear distribution protein nudE-like 1-B (344 aa).

The stretch at 13 to 190 forms a coiled coil; that stretch reads KEEIVYWREL…LAVRERQTDG (178 aa). Disordered stretches follow at residues 186–209 and 325–344; these read RQTD…TDSS and PPGV…PLSV. Over residues 333 to 344 the composition is skewed to pro residues; the sequence is PPSPPGLLPLSV.

It belongs to the nudE family. Phosphorylated in mitosis.

The protein localises to the cytoplasm. It localises to the cytoskeleton. Its subcellular location is the microtubule organizing center. It is found in the centrosome. The protein resides in the spindle. In terms of biological role, required for organization of the cellular microtubule array and microtubule anchoring at the centrosome. Positively regulates the activity of the minus-end directed microtubule motor protein dynein. May enhance dynein-mediated microtubule sliding by targeting dynein to the microtubule plus end. Positively regulates lysosome peripheral distribution and ruffled border formation in osteoclasts. The protein is Nuclear distribution protein nudE-like 1-B (ndel1-b) of Xenopus laevis (African clawed frog).